The following is a 375-amino-acid chain: Alcohol dehydrogenase 1C (375 aa).

Residue Ser-2 is modified to N-acetylserine. Position 23 is a phosphoserine (Ser-23). Residues Cys-47, His-68, Cys-98, Cys-101, Cys-104, Cys-112, and Cys-175 each contribute to the Zn(2+) site. Residues 200–205 (GLGGVG), Asp-224, Lys-229, Ile-270, 293–295 (VGV), 318–320 (AIF), and Arg-370 each bind NAD(+).

This sequence belongs to the zinc-containing alcohol dehydrogenase family. In terms of assembly, dimer of identical or non-identical chains of class I alcohol dehydrogenase: ADH1A, ADH1B, and ADH1C. It depends on Zn(2+) as a cofactor.

It is found in the cytoplasm. The enzyme catalyses a primary alcohol + NAD(+) = an aldehyde + NADH + H(+). It carries out the reaction ethanol + NAD(+) = acetaldehyde + NADH + H(+). In terms of biological role, alcohol dehydrogenase. Exhibits high activity for ethanol oxidation and plays a major role in ethanol catabolism. In Homo sapiens (Human), this protein is Alcohol dehydrogenase 1C (ADH1C).